The chain runs to 543 residues: Protein SGE1 (543 aa).

Over 1 to 8 (MKSTLSLT) the chain is Cytoplasmic. Residues 9 to 29 (LCVISLLLTLFLAALDIVIVV) traverse the membrane as a helical segment. The Extracellular portion of the chain corresponds to 30 to 41 (TLYDTIGIKFHD). Residues 42–62 (FGNIGWLVTGYALSNAVFMLL) traverse the membrane as a helical segment. Topologically, residues 63 to 79 (WGRLAEILGTKECLMIS) are cytoplasmic. A helical transmembrane segment spans residues 80-100 (VIVFEIGSLISALSNSMATLI). The Extracellular segment spans residues 101–103 (SGR). Residues 104 to 124 (VVAGFGGSGIESLAFVVGTSI) form a helical membrane-spanning segment. The Cytoplasmic portion of the chain corresponds to 125–131 (VRENHRG). Residues 132-152 (IMITALAISYVIAEGVGPFIG) traverse the membrane as a helical segment. Topologically, residues 153 to 162 (GAFNEHLSWR) are extracellular. The helical transmembrane segment at 163–183 (WCFYINLPIGAFAFIILAFCN) threads the bilayer. Over 184–227 (TSGEPHQKMWLPSKIKKIMNYDYGELLKASFWKNTFEVLVFKLD) the chain is Cytoplasmic. Residues 228 to 248 (MVGIILSSAGFTLLMLGLSFG) traverse the membrane as a helical segment. At 249 to 255 (GNNFPWN) the chain is on the extracellular side. A helical membrane pass occupies residues 256-276 (SGIIICFFTVGPILLLLFCAY). Residues 277–300 (DFHFLSLSGLHYDNKRIKPLLTWN) are Cytoplasmic-facing. The chain crosses the membrane as a helical span at residues 301–321 (IASNCGIFTSSITGFLSCFAY). The Extracellular portion of the chain corresponds to 322-341 (ELQSAYLVQLYQLVFKKKPT). A helical transmembrane segment spans residues 342–362 (LASIHLWELSIPAMIATMAIA). At 363–373 (YLNSKYGIIKP) the chain is on the cytoplasmic side. Residues 374–394 (AIVFGVLCGIVGSGLFTLING) form a helical membrane-spanning segment. Residues 395-399 (ELSQS) are Extracellular-facing. The helical transmembrane segment at 400 to 420 (IGYSILPGIAFGSIFQATLLS) threads the bilayer. At 421–443 (SQVQITSDDPDFQNKFIEVTAFN) the chain is on the cytoplasmic side. The helical transmembrane segment at 444–464 (SFAKSLGFAFGGNMGAMIFTA) threads the bilayer. Topologically, residues 465 to 508 (SLKNQMRSSQLNIPQFTSVETLLAYSTEHYDGPQSSLSKFINTA) are extracellular. A helical membrane pass occupies residues 509-529 (IHDVFYCALGCYALSFFFGIF). Residues 530–543 (TSSKKTTISAKKQQ) are Cytoplasmic-facing.

The protein belongs to the major facilitator superfamily.

It is found in the membrane. Functionally, drug export permease. Multi-copy suppressor of loss-of-function mutation of GAL11. Involved specifically in transcription of GAL4-dependent genes. Can link GAL4 with the basal transcription machinery if GAL11 is missing. Confers resistance to 10-N-nonyl acridine orange (NAO) and in general to cationic dyes. The polypeptide is Protein SGE1 (SGE1) (Saccharomyces cerevisiae (strain ATCC 204508 / S288c) (Baker's yeast)).